A 420-amino-acid chain; its full sequence is Phosphoribosylamine--glycine ligase (420 aa).

The region spanning 108-314 (KEIMVKYGVS…FAQNITDILD (207 aa)) is the ATP-grasp domain. Residue 134–195 (IEKHGAPIVV…EEFLEGEEFS (62 aa)) participates in ATP binding. Mg(2+) is bound by residues E284 and N286.

Belongs to the GARS family. The cofactor is Mg(2+). It depends on Mn(2+) as a cofactor.

The enzyme catalyses 5-phospho-beta-D-ribosylamine + glycine + ATP = N(1)-(5-phospho-beta-D-ribosyl)glycinamide + ADP + phosphate + H(+). The protein operates within purine metabolism; IMP biosynthesis via de novo pathway; N(1)-(5-phospho-D-ribosyl)glycinamide from 5-phospho-alpha-D-ribose 1-diphosphate: step 2/2. This Streptococcus pneumoniae (strain ATCC BAA-255 / R6) protein is Phosphoribosylamine--glycine ligase.